Consider the following 1089-residue polypeptide: Pentatricopeptide repeat-containing protein MRL1, chloroplastic (1089 aa).

The transit peptide at 1 to 72 (MEVTSTTFIS…SIRSPRLVVR (72 aa)) directs the protein to the chloroplast. PPR repeat units lie at residues 466–500 (TMSTFNMLMSVCASSQDIEGARGVLRLVQESGMTA), 501–535 (DCKLYTTLISSCAKSGKVDAMFEVFHQMSNSGVEA), 536–570 (NLHTFGALIDGCARAGQVAKAFGAYGILRSKNVKP), 571–605 (DRVVFNALISACGQSGAVDRAFDVLAEMKAETHPI), 608–642 (DHISIGALMKACCNAGQVERAKEVYQMIHKYGIRG), 643–677 (TPEVYTIAVNSCSKSGDWDFACSIYKDMKEKDVTP), 678–712 (DEVFFSALIDVAGHAKMLDEAFGILQDAKSQGIRL), 713–747 (GTISYSSLMGACCNAKDWKKALELYEKIKSIKLRP), 748–782 (TISTMNALITALCEGNQLPKAMEYLDEIKTLGLKP), and 783–817 (NTITYSMLMLASERKDDFEVSFKLLSQAKGDGVSP).

This sequence belongs to the PPR family. P subfamily. In terms of tissue distribution, expressed in stems, leaves and sepals.

The protein resides in the plastid. It localises to the chloroplast. Functionally, regulator of the large subunit (LS) of RuBisCO. Involved either in the processing or in the stabilization of the processed transcript, probably by acting as a barrier to the 5'&gt;3' degradation. In Arabidopsis thaliana (Mouse-ear cress), this protein is Pentatricopeptide repeat-containing protein MRL1, chloroplastic (MRL1).